The chain runs to 816 residues: Neuronal PAS domain-containing protein 2 (816 aa).

A compositionally biased stretch (basic and acidic residues) spans 1–10; the sequence is MDEDEKDRAK. A disordered region spans residues 1–21; sequence MDEDEKDRAKRASRNKSEKKR. The sufficient for heterodimer formation with BMAL1, E-box binding and for the effect of NADPH stretch occupies residues 1–61; that stretch reads MDEDEKDRAK…VIGFLQKHNE (61 aa). One can recognise a bHLH domain in the interval 9-59; it reads AKRASRNKSEKKRRDQFNVLIKELSSMLPGNTRKMDKTTVLEKVIGFLQKH. The region spanning 82–152 is the PAS 1 domain; that stretch reads NEEFTQLMLE…KILSSHMLVT (71 aa). Heme b is bound by residues His119 and His171. The PAS 2 domain occupies 237-307; the sequence is FLKEMCVADE…RCHQHLMQFG (71 aa). The 44-residue stretch at 311 to 354 folds into the PAC domain; it reads SCCYRFLTKGQQWIWLQTHYYITYHQWNSKPEFIVCTHSVVSYA. 4 disordered regions span residues 364–431, 610–639, 685–705, and 742–816; these read LALE…STPT, ISAQ…SQFS, QPMM…RTGR, and PSFP…LSES. Residues 400 to 413 are compositionally biased toward low complexity; that stretch reads SGLPSSPSPSASSR. Residues 420–431 are compositionally biased toward polar residues; the sequence is HTAMSEPTSTPT. Over residues 623–639 the composition is skewed to low complexity; sequence LLPASGRSLSSLPSQFS. Over residues 745–759 the composition is skewed to low complexity; sequence PASRPSPLQPAQAQQ. Residues 780-789 show a composition bias toward polar residues; sequence LLSTFSQQPG. Basic residues predominate over residues 806-816; that stretch reads PSRRVSRLSES.

As to quaternary structure, component of the circadian clock oscillator which includes the CRY proteins, CLOCK or NPAS2, BMAL1 or BMAL2, CSNK1D and/or CSNK1E, TIMELESS and the PER proteins. Efficient DNA binding requires dimerization with another bHLH protein. Interacts with NCOA3, KAT2B and CREBBP. Forms a heterodimer with BMAL1 and this heterodimerization is required for E-box-dependent transactivation. Interacts with EP300. Heme is required as a cofactor. As to expression, expressed in the retinal ganglion cells (at protein level). Expressed in the hypothalamic suprachiasmatic nuclei (SCN) of the brain. Also found in spinal cord, and to a lesser extent in colon, small intestine and uterus. Exhibits a diurnal variation in its expression in the brain.

It localises to the nucleus. With respect to regulation, carbon monoxide (CO) and the redox state of the cell can modulate the transcriptional activity of the NPAS2-BMAL1 heterodimer. NADH and NADPH enhance the DNA-binding activity of the heterodimer whereas CO binds the heme group in NPAS2 and inhibits the DNA-binding activity of the heterodimer. Its function is as follows. Transcriptional activator which forms a core component of the circadian clock. The circadian clock, an internal time-keeping system, regulates various physiological processes through the generation of approximately 24 hour circadian rhythms in gene expression, which are translated into rhythms in metabolism and behavior. It is derived from the Latin roots 'circa' (about) and 'diem' (day) and acts as an important regulator of a wide array of physiological functions including metabolism, sleep, body temperature, blood pressure, endocrine, immune, cardiovascular, and renal function. Consists of two major components: the central clock, residing in the suprachiasmatic nucleus (SCN) of the brain, and the peripheral clocks that are present in nearly every tissue and organ system. Both the central and peripheral clocks can be reset by environmental cues, also known as Zeitgebers (German for 'timegivers'). The predominant Zeitgeber for the central clock is light, which is sensed by retina and signals directly to the SCN. The central clock entrains the peripheral clocks through neuronal and hormonal signals, body temperature and feeding-related cues, aligning all clocks with the external light/dark cycle. Circadian rhythms allow an organism to achieve temporal homeostasis with its environment at the molecular level by regulating gene expression to create a peak of protein expression once every 24 hours to control when a particular physiological process is most active with respect to the solar day. Transcription and translation of core clock components (CLOCK, NPAS2, BMAL1, BMAL2, PER1, PER2, PER3, CRY1 and CRY2) plays a critical role in rhythm generation, whereas delays imposed by post-translational modifications (PTMs) are important for determining the period (tau) of the rhythms (tau refers to the period of a rhythm and is the length, in time, of one complete cycle). A diurnal rhythm is synchronized with the day/night cycle, while the ultradian and infradian rhythms have a period shorter and longer than 24 hours, respectively. Disruptions in the circadian rhythms contribute to the pathology of cardiovascular diseases, cancer, metabolic syndromes and aging. A transcription/translation feedback loop (TTFL) forms the core of the molecular circadian clock mechanism. Transcription factors, CLOCK or NPAS2 and BMAL1 or BMAL2, form the positive limb of the feedback loop, act in the form of a heterodimer and activate the transcription of core clock genes and clock-controlled genes (involved in key metabolic processes), harboring E-box elements (5'-CACGTG-3') within their promoters. The core clock genes: PER1/2/3 and CRY1/2 which are transcriptional repressors form the negative limb of the feedback loop and interact with the CLOCK|NPAS2-BMAL1|BMAL2 heterodimer inhibiting its activity and thereby negatively regulating their own expression. This heterodimer also activates nuclear receptors NR1D1/2 and RORA/B/G, which form a second feedback loop and which activate and repress BMAL1 transcription, respectively. The NPAS2-BMAL1 heterodimer positively regulates the expression of MAOA, F7 and LDHA and modulates the circadian rhythm of daytime contrast sensitivity by regulating the rhythmic expression of adenylate cyclase type 1 (ADCY1) in the retina. NPAS2 plays an important role in sleep homeostasis and in maintaining circadian behaviors in normal light/dark and feeding conditions and in the effective synchronization of feeding behavior with scheduled food availability. Regulates the gene transcription of key metabolic pathways in the liver and is involved in DNA damage response by regulating several cell cycle and DNA repair genes. Controls the circadian rhythm of NR0B2 expression by binding rhythmically to its promoter. Mediates the diurnal variation in the expression of GABARA1 receptor in the brain and contributes to the regulation of anxiety-like behaviors and GABAergic neurotransmission in the ventral striatum. In Mus musculus (Mouse), this protein is Neuronal PAS domain-containing protein 2 (Npas2).